A 131-amino-acid polypeptide reads, in one-letter code: Large ribosomal subunit protein eL32 (131 aa).

It belongs to the eukaryotic ribosomal protein eL32 family. In terms of assembly, component of the large ribosomal subunit. Mature ribosomes consist of a small (40S) and a large (60S) subunit. The 40S subunit contains about 32 different proteins and 1 molecule of RNA (18S). The 60S subunit contains 45 different proteins and 3 molecules of RNA (25S, 5.8S and 5S).

It is found in the cytoplasm. Component of the ribosome, a large ribonucleoprotein complex responsible for the synthesis of proteins in the cell. The small ribosomal subunit (SSU) binds messenger RNAs (mRNAs) and translates the encoded message by selecting cognate aminoacyl-transfer RNA (tRNA) molecules. The large subunit (LSU) contains the ribosomal catalytic site termed the peptidyl transferase center (PTC), which catalyzes the formation of peptide bonds, thereby polymerizing the amino acids delivered by tRNAs into a polypeptide chain. The nascent polypeptides leave the ribosome through a tunnel in the LSU and interact with protein factors that function in enzymatic processing, targeting, and the membrane insertion of nascent chains at the exit of the ribosomal tunnel. The chain is Large ribosomal subunit protein eL32 from Candida albicans (strain SC5314 / ATCC MYA-2876) (Yeast).